The chain runs to 170 residues: Mitochondrial fission 1 protein A (170 aa).

A TPR repeat occupies 90–123 (REKLYLLAVGYYRSGNYSRSRQLVDRCIEMQADW). The helical transmembrane segment at 142–162 (VIGIGITATAFGAVGLIAGGI) threads the bilayer.

The protein belongs to the FIS1 family. Interacts with ARC5.

It is found in the mitochondrion outer membrane. Its subcellular location is the peroxisome membrane. Component of the peroxisomal and mitochondrial division machineries. Plays a role in promoting the fission of mitochondria and peroxisomes. The polypeptide is Mitochondrial fission 1 protein A (FIS1A) (Arabidopsis thaliana (Mouse-ear cress)).